Consider the following 212-residue polypeptide: Transcriptional repressor CcpN (212 aa).

One can recognise an HTH deoR-type domain in the interval 6 to 70; that stretch reads LNKRQEHILQ…FYTGKTGTQL (65 aa). Positions 23-42 form a DNA-binding region, H-T-H motif; sequence ITGEHIAEKLNLTRATLRPD. 2 CBS domains span residues 83–139 and 148–211; these read FQSI…QQEL and MTRM…ENEI.

Transcription repressor that binds to the promoter of gapB and pckA genes, preventing their expression. Acts as a regulator for catabolite repression of gluconeogenic genes. This is Transcriptional repressor CcpN (ccpN) from Bacillus subtilis (strain 168).